The sequence spans 879 residues: Phosphoenolpyruvate carboxylase (879 aa).

Catalysis depends on residues His138 and Lys545.

Belongs to the PEPCase type 1 family. The cofactor is Mg(2+).

It catalyses the reaction oxaloacetate + phosphate = phosphoenolpyruvate + hydrogencarbonate. Forms oxaloacetate, a four-carbon dicarboxylic acid source for the tricarboxylic acid cycle. In Haemophilus influenzae (strain PittEE), this protein is Phosphoenolpyruvate carboxylase.